A 657-amino-acid polypeptide reads, in one-letter code: UvrABC system protein B (657 aa).

The Helicase ATP-binding domain maps to 29 to 416 (KLAEFQTNEQ…LSHNNVVEQL (388 aa)). 42 to 49 (GATGTGKT) serves as a coordination point for ATP. The Beta-hairpin motif lies at 95–118 (YFDFYQPEAYLPAKGVYIEKSATV). The Helicase C-terminal domain maps to 435–597 (QVEDLVSEII…KTPMTVQKPI (163 aa)). One can recognise a UVR domain in the interval 615–650 (AALIKQLTKEMKQAAANQNYELAIEIRDSIFELEKQ).

This sequence belongs to the UvrB family. In terms of assembly, forms a heterotetramer with UvrA during the search for lesions. Interacts with UvrC in an incision complex.

It is found in the cytoplasm. In terms of biological role, the UvrABC repair system catalyzes the recognition and processing of DNA lesions. A damage recognition complex composed of 2 UvrA and 2 UvrB subunits scans DNA for abnormalities. Upon binding of the UvrA(2)B(2) complex to a putative damaged site, the DNA wraps around one UvrB monomer. DNA wrap is dependent on ATP binding by UvrB and probably causes local melting of the DNA helix, facilitating insertion of UvrB beta-hairpin between the DNA strands. Then UvrB probes one DNA strand for the presence of a lesion. If a lesion is found the UvrA subunits dissociate and the UvrB-DNA preincision complex is formed. This complex is subsequently bound by UvrC and the second UvrB is released. If no lesion is found, the DNA wraps around the other UvrB subunit that will check the other stand for damage. This Mycoplasma pneumoniae (strain ATCC 29342 / M129 / Subtype 1) (Mycoplasmoides pneumoniae) protein is UvrABC system protein B.